Reading from the N-terminus, the 224-residue chain is Flagellar L-ring protein (224 aa).

Positions methionine 1–glycine 15 are cleaved as a signal peptide. A lipid anchor (N-palmitoyl cysteine) is attached at cysteine 16. The S-diacylglycerol cysteine moiety is linked to residue cysteine 16.

The protein belongs to the FlgH family. In terms of assembly, the basal body constitutes a major portion of the flagellar organelle and consists of four rings (L,P,S, and M) mounted on a central rod.

The protein resides in the cell outer membrane. It localises to the bacterial flagellum basal body. Assembles around the rod to form the L-ring and probably protects the motor/basal body from shearing forces during rotation. The protein is Flagellar L-ring protein of Shewanella frigidimarina (strain NCIMB 400).